A 142-amino-acid chain; its full sequence is Large ribosomal subunit protein uL11 (142 aa).

It belongs to the universal ribosomal protein uL11 family. In terms of assembly, part of the ribosomal stalk of the 50S ribosomal subunit. Interacts with L10 and the large rRNA to form the base of the stalk. L10 forms an elongated spine to which L12 dimers bind in a sequential fashion forming a multimeric L10(L12)X complex. In terms of processing, one or more lysine residues are methylated.

In terms of biological role, forms part of the ribosomal stalk which helps the ribosome interact with GTP-bound translation factors. This is Large ribosomal subunit protein uL11 from Xanthomonas campestris pv. campestris (strain 8004).